The sequence spans 195 residues: PRS fimbrial minor pilin protein (195 aa).

An N-terminal signal peptide occupies residues 1–22 (MRLRFSVPLFFFGCVFVHGVFA). The cysteines at positions 58 and 97 are disulfide-linked.

The protein belongs to the fimbrial protein family.

It localises to the secreted. It is found in the fimbrium. In terms of biological role, fimbriae (also called pili), polar filaments radiating from the surface of the bacterium to a length of 0.5-1.5 micrometers and numbering 100-300 per cell, enable bacteria to colonize the epithelium of specific host organs. Seems to anchor the pilus to the bacterial cell. In addition the stoichiometric relationship between PrsH and PrsA determines the pilus length. The protein is PRS fimbrial minor pilin protein (prsH) of Escherichia coli.